A 466-amino-acid chain; its full sequence is 3-isopropylmalate dehydratase large subunit (466 aa).

The [4Fe-4S] cluster site is built by Cys-347, Cys-407, and Cys-410.

This sequence belongs to the aconitase/IPM isomerase family. LeuC type 1 subfamily. Heterodimer of LeuC and LeuD. [4Fe-4S] cluster is required as a cofactor.

It carries out the reaction (2R,3S)-3-isopropylmalate = (2S)-2-isopropylmalate. It participates in amino-acid biosynthesis; L-leucine biosynthesis; L-leucine from 3-methyl-2-oxobutanoate: step 2/4. In terms of biological role, catalyzes the isomerization between 2-isopropylmalate and 3-isopropylmalate, via the formation of 2-isopropylmaleate. This Solibacter usitatus (strain Ellin6076) protein is 3-isopropylmalate dehydratase large subunit.